A 508-amino-acid chain; its full sequence is Anthranilate synthase component 1 (508 aa).

Residues Ser-49 and 282 to 284 (PYM) each bind L-tryptophan. 317–318 (GT) contributes to the chorismate binding site. Glu-344 contacts Mg(2+). Chorismate is bound by residues Tyr-432, Arg-452, 466–468 (GAG), and Gly-468. Position 481 (Glu-481) interacts with Mg(2+).

This sequence belongs to the anthranilate synthase component I family. In terms of assembly, heterotetramer consisting of two non-identical subunits: a beta subunit (TrpG) and a large alpha subunit (TrpE). It depends on Mg(2+) as a cofactor.

It carries out the reaction chorismate + L-glutamine = anthranilate + pyruvate + L-glutamate + H(+). Its pathway is amino-acid biosynthesis; L-tryptophan biosynthesis; L-tryptophan from chorismate: step 1/5. With respect to regulation, feedback inhibited by tryptophan. Functionally, part of a heterotetrameric complex that catalyzes the two-step biosynthesis of anthranilate, an intermediate in the biosynthesis of L-tryptophan. In the first step, the glutamine-binding beta subunit (TrpG) of anthranilate synthase (AS) provides the glutamine amidotransferase activity which generates ammonia as a substrate that, along with chorismate, is used in the second step, catalyzed by the large alpha subunit of AS (TrpE) to produce anthranilate. In the absence of TrpG, TrpE can synthesize anthranilate directly from chorismate and high concentrations of ammonia. The chain is Anthranilate synthase component 1 (trpE) from Geobacillus stearothermophilus (Bacillus stearothermophilus).